Reading from the N-terminus, the 650-residue chain is Acetyl-coenzyme A synthetase (650 aa).

CoA contacts are provided by residues 191–194 (RGGR), threonine 311, and asparagine 335. Residues 387–389 (GEP), 411–416 (DTWWQT), aspartate 500, and arginine 515 each bind ATP. Serine 523 is a CoA binding site. Residue arginine 526 participates in ATP binding. Mg(2+) is bound by residues valine 537, histidine 539, and valine 542. Arginine 584 provides a ligand contact to CoA. N6-acetyllysine is present on lysine 609.

It belongs to the ATP-dependent AMP-binding enzyme family. Mg(2+) serves as cofactor. Acetylated. Deacetylation by the SIR2-homolog deacetylase activates the enzyme.

The catalysed reaction is acetate + ATP + CoA = acetyl-CoA + AMP + diphosphate. Functionally, catalyzes the conversion of acetate into acetyl-CoA (AcCoA), an essential intermediate at the junction of anabolic and catabolic pathways. AcsA undergoes a two-step reaction. In the first half reaction, AcsA combines acetate with ATP to form acetyl-adenylate (AcAMP) intermediate. In the second half reaction, it can then transfer the acetyl group from AcAMP to the sulfhydryl group of CoA, forming the product AcCoA. This Shewanella putrefaciens (strain CN-32 / ATCC BAA-453) protein is Acetyl-coenzyme A synthetase.